The sequence spans 157 residues: Large ribosomal subunit protein bL34c (157 aa).

The N-terminal 97 residues, 1 to 97 (MASLSTSVVA…GQRRRGLVVR (97 aa)), are a transit peptide targeting the chloroplast.

This sequence belongs to the bacterial ribosomal protein bL34 family. Part of the 50S ribosomal subunit.

It localises to the plastid. It is found in the chloroplast. In terms of biological role, this protein binds directly to 23S ribosomal RNA. The chain is Large ribosomal subunit protein bL34c (RPL34) from Arabidopsis thaliana (Mouse-ear cress).